Reading from the N-terminus, the 185-residue chain is MMLIIGLGNPGKEYEHTRHNIGFIALENIAKQYETSFSVKKKFHCEIAESTNNGQKLIFVKPTTYMNLSGKSVIAVKTYYNIPLEKIFVIHDDIDLELGKIKFKTGGGNGGHNGLKSIDGIIGNNYHRIRIGVGRPQNSQDVADYVLNNFSKTEYVIAEQAIDKITDNFNLILENKLEEFKSKMV.

TRNA is bound at residue Tyr-14. The Proton acceptor role is filled by His-19. TRNA contacts are provided by Tyr-65, Asn-67, and Asn-113.

This sequence belongs to the PTH family. As to quaternary structure, monomer.

The protein resides in the cytoplasm. The enzyme catalyses an N-acyl-L-alpha-aminoacyl-tRNA + H2O = an N-acyl-L-amino acid + a tRNA + H(+). Hydrolyzes ribosome-free peptidyl-tRNAs (with 1 or more amino acids incorporated), which drop off the ribosome during protein synthesis, or as a result of ribosome stalling. Its function is as follows. Catalyzes the release of premature peptidyl moieties from peptidyl-tRNA molecules trapped in stalled 50S ribosomal subunits, and thus maintains levels of free tRNAs and 50S ribosomes. The sequence is that of Peptidyl-tRNA hydrolase from Rickettsia bellii (strain RML369-C).